Reading from the N-terminus, the 598-residue chain is Elongation factor 4 (598 aa).

The tr-type G domain maps to 2–184 (KNIRNFSIIA…EIVAKIPAPE (183 aa)). GTP contacts are provided by residues 14–19 (DHGKST) and 131–134 (NKID).

Belongs to the TRAFAC class translation factor GTPase superfamily. Classic translation factor GTPase family. LepA subfamily.

It localises to the cell inner membrane. The enzyme catalyses GTP + H2O = GDP + phosphate + H(+). In terms of biological role, required for accurate and efficient protein synthesis under certain stress conditions. May act as a fidelity factor of the translation reaction, by catalyzing a one-codon backward translocation of tRNAs on improperly translocated ribosomes. Back-translocation proceeds from a post-translocation (POST) complex to a pre-translocation (PRE) complex, thus giving elongation factor G a second chance to translocate the tRNAs correctly. Binds to ribosomes in a GTP-dependent manner. In Haemophilus influenzae (strain ATCC 51907 / DSM 11121 / KW20 / Rd), this protein is Elongation factor 4.